The following is an 80-amino-acid chain: Acyl carrier protein (80 aa).

One can recognise a Carrier domain in the interval 2–77 (KNIEERIKKI…KSIDFIQKKN (76 aa)). An O-(pantetheine 4'-phosphoryl)serine modification is found at S37.

This sequence belongs to the acyl carrier protein (ACP) family. In terms of processing, 4'-phosphopantetheine is transferred from CoA to a specific serine of apo-ACP by AcpS. This modification is essential for activity because fatty acids are bound in thioester linkage to the sulfhydryl of the prosthetic group.

It localises to the cytoplasm. The protein operates within lipid metabolism; fatty acid biosynthesis. Functionally, carrier of the growing fatty acid chain in fatty acid biosynthesis. This is Acyl carrier protein from Buchnera aphidicola subsp. Acyrthosiphon pisum (strain APS) (Acyrthosiphon pisum symbiotic bacterium).